The chain runs to 272 residues: Formamidopyrimidine-DNA glycosylase (272 aa).

Proline 2 serves as the catalytic Schiff-base intermediate with DNA. The active-site Proton donor is glutamate 3. The Proton donor; for beta-elimination activity role is filled by lysine 58. Histidine 92, arginine 111, and arginine 153 together coordinate DNA. The FPG-type zinc finger occupies 238–272; it reads NVYGRGGEPCPVCAKPLTEKPLSQRTTVYCTHCQN. Arginine 262 functions as the Proton donor; for delta-elimination activity in the catalytic mechanism.

It belongs to the FPG family. As to quaternary structure, monomer. Requires Zn(2+) as cofactor.

The enzyme catalyses Hydrolysis of DNA containing ring-opened 7-methylguanine residues, releasing 2,6-diamino-4-hydroxy-5-(N-methyl)formamidopyrimidine.. It carries out the reaction 2'-deoxyribonucleotide-(2'-deoxyribose 5'-phosphate)-2'-deoxyribonucleotide-DNA = a 3'-end 2'-deoxyribonucleotide-(2,3-dehydro-2,3-deoxyribose 5'-phosphate)-DNA + a 5'-end 5'-phospho-2'-deoxyribonucleoside-DNA + H(+). Involved in base excision repair of DNA damaged by oxidation or by mutagenic agents. Acts as a DNA glycosylase that recognizes and removes damaged bases. Has a preference for oxidized purines, such as 7,8-dihydro-8-oxoguanine (8-oxoG). Has AP (apurinic/apyrimidinic) lyase activity and introduces nicks in the DNA strand. Cleaves the DNA backbone by beta-delta elimination to generate a single-strand break at the site of the removed base with both 3'- and 5'-phosphates. The polypeptide is Formamidopyrimidine-DNA glycosylase (Teredinibacter turnerae (strain ATCC 39867 / T7901)).